The following is a 145-amino-acid chain: AN1-type zinc finger protein 2A (145 aa).

2 consecutive AN1-type zinc fingers follow at residues 4 to 52 and 94 to 142; these read PDLG…QKDV and KIFT…RPTI. Zn(2+) contacts are provided by Cys10, Cys15, Cys25, Cys28, Cys33, His36, His42, Cys44, Cys100, Cys105, Cys115, Cys118, Cys123, His126, His132, and Cys134.

The protein localises to the cytoplasm. It localises to the nucleus. This Homo sapiens (Human) protein is AN1-type zinc finger protein 2A (ZFAND2A).